The sequence spans 401 residues: MAKAIKKVVLAYSGGLDTSVILKWIAVTYGCEVVTLTADLGQEEDLDGVDAKALRTGASRAYVEDLREEFARDFIFPMMRSGAVYEGRYLLGTSIARPLIAKRLVDIARAEGAQAVAHGATGKGNDQVRFELAVNALAPDLDVIAPWRIWDLRSRTDLTAFAEQHGIPLSTSSKQYSMDRNMLHCSFEGGELEDPWCEPGPNSHVMAVPVEQAPDTPEYITIEFKKGDAVAVNGEAMSPASIIRTLNTIGGRHGIGRLDMVENRFVGIKSRGVYETPGGTVLHIAHRDLEGICMDRESMHLRDQLIPRYSEAVYNGFWFAPEREAMQAFIDKTQETVNGTVRLKLYKGNAYPVGRTSPNTLYCHDLATFEDCATYDHADAAGFIKLQGLRVRGYAQRVKKD.

Residues 11–19 (AYSGGLDTS) and A38 each bind ATP. 2 residues coordinate L-citrulline: Y89 and S94. G119 contacts ATP. Residues T121, N125, and D126 each contribute to the L-aspartate site. Residue N125 participates in L-citrulline binding. L-citrulline is bound by residues R129, S177, S186, E262, and Y274.

The protein belongs to the argininosuccinate synthase family. Type 1 subfamily. As to quaternary structure, homotetramer.

The protein localises to the cytoplasm. The enzyme catalyses L-citrulline + L-aspartate + ATP = 2-(N(omega)-L-arginino)succinate + AMP + diphosphate + H(+). Its pathway is amino-acid biosynthesis; L-arginine biosynthesis; L-arginine from L-ornithine and carbamoyl phosphate: step 2/3. In Nitratidesulfovibrio vulgaris (strain DSM 19637 / Miyazaki F) (Desulfovibrio vulgaris), this protein is Argininosuccinate synthase.